Here is a 288-residue protein sequence, read N- to C-terminus: Diaminopimelate epimerase (288 aa).

Asn-14 and Asn-67 together coordinate substrate. Cys-76 (proton donor) is an active-site residue. Residues 77-78, Asn-166, Asn-199, and 217-218 each bind substrate; these read GN and ER. Residue Cys-226 is the Proton acceptor of the active site. Position 227-228 (227-228) interacts with substrate; sequence GT.

Belongs to the diaminopimelate epimerase family. Homodimer.

The protein localises to the cytoplasm. The catalysed reaction is (2S,6S)-2,6-diaminopimelate = meso-2,6-diaminopimelate. It functions in the pathway amino-acid biosynthesis; L-lysine biosynthesis via DAP pathway; DL-2,6-diaminopimelate from LL-2,6-diaminopimelate: step 1/1. Its function is as follows. Catalyzes the stereoinversion of LL-2,6-diaminopimelate (L,L-DAP) to meso-diaminopimelate (meso-DAP), a precursor of L-lysine and an essential component of the bacterial peptidoglycan. This Bacillus cytotoxicus (strain DSM 22905 / CIP 110041 / 391-98 / NVH 391-98) protein is Diaminopimelate epimerase.